Here is a 103-residue protein sequence, read N- to C-terminus: Phospholipase A2 large subunit (103 aa).

Ca(2+) contacts are provided by Trp-7, Gly-9, and Gly-11. 4 disulfides stabilise this stretch: Cys-8–Cys-30, Cys-29–Cys-68, Cys-36–Cys-61, and Cys-59–Cys-96. The N-linked (GlcNAc...) asparagine glycan is linked to Asn-16. His-33 is a catalytic residue. Asp-34 contacts Ca(2+).

The protein belongs to the phospholipase A2 family. Group III subfamily. Heterodimer composed of a large subunit and a small subunit; disulfide-linked. Ca(2+) is required as a cofactor. As to expression, expressed by the venom gland.

It localises to the secreted. The enzyme catalyses a 1,2-diacyl-sn-glycero-3-phosphocholine + H2O = a 1-acyl-sn-glycero-3-phosphocholine + a fatty acid + H(+). Its function is as follows. Phospholipase toxin, which catalyzes the calcium-dependent hydrolysis of the 2-acyl groups in 3-sn-phosphoglycerides. Inhibits both skeletal (RYR1) and cardiac (RYR2) ryanodine receptors (calcium release channels). Probably blocks ryanodine receptors by generating a lipid product. This chain is Phospholipase A2 large subunit, found in Chersonesometrus fulvipes (Indian black scorpion).